Reading from the N-terminus, the 1209-residue chain is Limbin (1209 aa).

The Extracellular portion of the chain corresponds to 1–200 (MKFSKEIEVF…VLPNHGLHAA (200 aa)). Asn120 carries an N-linked (GlcNAc...) asparagine glycan. A helical membrane pass occupies residues 201–221 (GFCVAFILSLVLTWAVLFFMV). Over 222-1209 (RYQCVKGSSL…KKAAWALGLN (988 aa)) the chain is Cytoplasmic. Coiled coils occupy residues 355–394 (TAECDLETRKKTESQYQREMAAMEEAEEVLKRVSERSAVE), 553–697 (KQKL…EERD), and 920–1012 (ELQE…METD). Residues 689–700 (ERLEGEERDRGQ) show a composition bias toward basic and acidic residues. Residues 689-714 (ERLEGEERDRGQEGVQSVRQRLKDDA) are disordered.

In terms of assembly, component of the EvC complex composed of EFCAB7, IQCE, EVC2 and EVC; built from two subcomplexes, EVC2:EVC and EFCAB7:IQCE. Interacts with EVC. Interacts (via N-terminal end) with EFCAB7. Interacts (via N-terminal end) with IQCE.

It is found in the cell membrane. Its subcellular location is the cytoplasm. The protein localises to the cytoskeleton. The protein resides in the cilium basal body. It localises to the cell projection. It is found in the cilium. Its subcellular location is the cilium membrane. The protein localises to the nucleus. Component of the EvC complex that positively regulates ciliary Hedgehog (Hh) signaling. Plays a critical role in bone formation and skeletal development. May be involved in early embryonic morphogenesis. The protein is Limbin (EVC2) of Bos taurus (Bovine).